A 315-amino-acid polypeptide reads, in one-letter code: Iron(3+)-hydroxamate-binding protein FhuD (315 aa).

Residues 1 to 23 (MTHIYKKLGAAFFALLLIAALAA) form the signal peptide. Residue cysteine 24 is the site of N-palmitoyl cysteine attachment. Cysteine 24 carries S-diacylglycerol cysteine lipidation. A Fe/B12 periplasmic-binding domain is found at 60–315 (RVVVMADGYY…LEFITESLTK (256 aa)).

It belongs to the bacterial solute-binding protein 8 family. In terms of assembly, the complex is composed of an ATP-binding protein (FhuC), two transmembrane proteins (FhuB and FhuG) and a solute-binding protein (FhuD or YxeB).

The protein resides in the cell membrane. It localises to the membrane raft. Its function is as follows. Part of the ABC transporter complex FhuCBGD involved in iron(3+)-hydroxamate import. Binds the iron(3+)-hydroxamate complex and transfers it to the membrane-bound permease. Required for the transport of ferrichrome and coprogen. In Bacillus subtilis (strain 168), this protein is Iron(3+)-hydroxamate-binding protein FhuD (fhuD).